The following is a 428-amino-acid chain: Light-independent protochlorophyllide reductase subunit N (428 aa).

[4Fe-4S] cluster contacts are provided by C29, C54, and C115.

Belongs to the BchN/ChlN family. Protochlorophyllide reductase is composed of three subunits; BchL, BchN and BchB. Forms a heterotetramer of two BchB and two BchN subunits. [4Fe-4S] cluster serves as cofactor.

It catalyses the reaction chlorophyllide a + oxidized 2[4Fe-4S]-[ferredoxin] + 2 ADP + 2 phosphate = protochlorophyllide a + reduced 2[4Fe-4S]-[ferredoxin] + 2 ATP + 2 H2O. The protein operates within porphyrin-containing compound metabolism; bacteriochlorophyll biosynthesis (light-independent). Functionally, component of the dark-operative protochlorophyllide reductase (DPOR) that uses Mg-ATP and reduced ferredoxin to reduce ring D of protochlorophyllide (Pchlide) to form chlorophyllide a (Chlide). This reaction is light-independent. The NB-protein (BchN-BchB) is the catalytic component of the complex. This Cereibacter sphaeroides (strain KD131 / KCTC 12085) (Rhodobacter sphaeroides) protein is Light-independent protochlorophyllide reductase subunit N.